Reading from the N-terminus, the 373-residue chain is Glutamate 5-kinase (373 aa).

Residue Lys15 coordinates ATP. Positions 54, 141, and 153 each coordinate substrate. Residues 173 to 174 (SD) and 215 to 221 (TGGMATK) contribute to the ATP site. The 79-residue stretch at 280–358 (RGKLLVDEGA…SEIEVVLGYK (79 aa)) folds into the PUA domain.

It belongs to the glutamate 5-kinase family.

It is found in the cytoplasm. It carries out the reaction L-glutamate + ATP = L-glutamyl 5-phosphate + ADP. Its pathway is amino-acid biosynthesis; L-proline biosynthesis; L-glutamate 5-semialdehyde from L-glutamate: step 1/2. Its function is as follows. Catalyzes the transfer of a phosphate group to glutamate to form L-glutamate 5-phosphate. The protein is Glutamate 5-kinase of Syntrophotalea carbinolica (strain DSM 2380 / NBRC 103641 / GraBd1) (Pelobacter carbinolicus).